The primary structure comprises 212 residues: Putative tyrosine-protein phosphatase R622 (212 aa).

The Tyrosine-protein phosphatase domain occupies 9-191 (KISQVTNNIF…LQGYQSKKEN (183 aa)). Cys135 (phosphocysteine intermediate) is an active-site residue.

Belongs to the protein-tyrosine phosphatase family. Non-receptor class dual specificity subfamily.

The enzyme catalyses O-phospho-L-tyrosyl-[protein] + H2O = L-tyrosyl-[protein] + phosphate. This Acanthamoeba polyphaga mimivirus (APMV) protein is Putative tyrosine-protein phosphatase R622.